Reading from the N-terminus, the 261-residue chain is Sulfur carrier protein FdhD (261 aa).

The active-site Cysteine persulfide intermediate is the C105. Residue F245 to R250 coordinates Mo-bis(molybdopterin guanine dinucleotide).

It belongs to the FdhD family.

Its subcellular location is the cytoplasm. Functionally, required for formate dehydrogenase (FDH) activity. Acts as a sulfur carrier protein that transfers sulfur from IscS to the molybdenum cofactor prior to its insertion into FDH. The sequence is that of Sulfur carrier protein FdhD from Listeria monocytogenes serotype 4b (strain F2365).